The following is a 177-amino-acid chain: Large ribosomal subunit protein uL6 (177 aa).

This sequence belongs to the universal ribosomal protein uL6 family. As to quaternary structure, part of the 50S ribosomal subunit.

Functionally, this protein binds to the 23S rRNA, and is important in its secondary structure. It is located near the subunit interface in the base of the L7/L12 stalk, and near the tRNA binding site of the peptidyltransferase center. In Stutzerimonas stutzeri (strain A1501) (Pseudomonas stutzeri), this protein is Large ribosomal subunit protein uL6.